A 277-amino-acid polypeptide reads, in one-letter code: Shikimate dehydrogenase (NADP(+)) (277 aa).

Shikimate is bound by residues 15 to 17 and Thr-62; that span reads SLS. Lys-66 (proton acceptor) is an active-site residue. Asn-87 and Asp-102 together coordinate shikimate. NADP(+)-binding positions include 127–131, 151–156, and Ile-219; these read GAGGA and NRTVDK. Shikimate is bound at residue Tyr-221. Gly-242 contacts NADP(+).

The protein belongs to the shikimate dehydrogenase family. As to quaternary structure, homodimer.

It catalyses the reaction shikimate + NADP(+) = 3-dehydroshikimate + NADPH + H(+). The protein operates within metabolic intermediate biosynthesis; chorismate biosynthesis; chorismate from D-erythrose 4-phosphate and phosphoenolpyruvate: step 4/7. Functionally, involved in the biosynthesis of the chorismate, which leads to the biosynthesis of aromatic amino acids. Catalyzes the reversible NADPH linked reduction of 3-dehydroshikimate (DHSA) to yield shikimate (SA). This chain is Shikimate dehydrogenase (NADP(+)), found in Bacillus thuringiensis subsp. konkukian (strain 97-27).